The following is a 426-amino-acid chain: MKHTFVLFLSLILLVLPGCSAEKSSADTAKKTLTIYSTMSTDSERDTFRKLAAAFEKEHSDIHVSLHFPGNDYENMMRVRMAANDLPDLFDTHGWGKIRYGEYTADLRDMKWTQDLDPNLNSILKNKSGKVYAYPINQAKDGLAYNRNILDRYGIAPPETMDDFIKALRTIKEKSKGSIVPFWFAGYDKSSFAQYYDQFATPLLITDPAHNEKKQLINGTFQWSKFTYLSEILKQMQKEKLINIDAVTAKKSQLIELMAQNKIAFTMQGGTLGQDVAQINPNVKVGIIPTPAIHPGDDPIWIGGERYTLAAWKDSPQLKEAKDFIAFMARPANAKQMAEATSLPSGLTNVKADIFYANDYEYYQDVKVEPYFDRLYLPNGMWDVLGTVGQELAADILAPQDISQKLGREYKRLREQSETQGAENNE.

An N-terminal signal peptide occupies residues 1–18 (MKHTFVLFLSLILLVLPG). A lipid anchor (N-palmitoyl cysteine) is attached at C19. Residue C19 is the site of S-diacylglycerol cysteine attachment.

It belongs to the bacterial solute-binding protein 1 family. The complex is composed of two ATP-binding proteins (MsmX), two transmembrane proteins (MelC and MelD) and a solute-binding protein (MelE).

It is found in the cell membrane. Its function is as follows. Part of the ABC transporter complex MelEDC-MsmX involved in melibiose, raffinose and stachyose import. Binds melibiose, raffinose and stachyose. This Bacillus subtilis (strain 168) protein is Melibiose/raffinose/stachyose-binding protein MelE.